A 95-amino-acid polypeptide reads, in one-letter code: Defensin-like protein 247 (95 aa).

Residues 1–24 (MKFAAIFLVTCVFFSLFSSNLSQG) form the signal peptide. 4 disulfide bridges follow: Cys-37–Cys-94, Cys-48–Cys-77, Cys-56–Cys-87, and Cys-75–Cys-89.

The protein belongs to the DEFL family.

It localises to the secreted. In Arabidopsis thaliana (Mouse-ear cress), this protein is Defensin-like protein 247 (SCRL6).